The chain runs to 699 residues: MAREYKIEDYRNFGIMAHIDAGKTTTTERILYYTGKSHKIGEVHDGAATMDWMEQEQERGITITSAATTTFWKGRDGKMRRFNIIDTPGHVDFTIEVERSLRVLDGAIALLDANAGVEPQTETVWRQAEKYNVPRMIFCNKMDKTGADFYRSVEMIKTRLGATAVVMQLPIGAETEFKGVIDLIEMNALIWRDESLGAQWDVVEIPDDLKAKADEYREKLIETVVEIDEEAMEDYLNGIMPDNDKIRALVRRGTIDVKFHPMFCGTAFKNKGVQPLLDAVVDYLPSPLDIPAIKGIDFKTEAEIERHADDSEPLSMLAFKIMNDPFVGSLTFARIYSGKLEKGTSVINTVKDKRERVGRMLQMHSNSREDIEEAFAGDIVALAGLKETTTGDTLCDPLKPVILERMEFPEPVIQIAIEPKTKGDQEKMGLALNRLAAEDPSFRVKTDEESGQTIIAGMGELHLDILVDRMRREFKVEATVGAPQVAYRETITRQHEEDYTHKKQSGGTGQFARVKIIFEPNPEGEDFKFESKIVGGAVPKEYIPGVQKGIESVLSSGPLAGFPMLGVKATLIDGAYHDVDSSVLAFEIASRACFREAAKKAGAQLLEPMMKVEVVTPEDYVGDVIGDLNSRRGQIQGQESRGITIVISAHVPLANMFKYVDNLRSMSQGRAQYSMTFDHYSPVPSNVAQEIQAKYSGQK.

Residues 8 to 288 (EDYRNFGIMA…AVVDYLPSPL (281 aa)) form the tr-type G domain. GTP-binding positions include 17-24 (AHIDAGKT), 86-90 (DTPGH), and 140-143 (NKMD).

Belongs to the TRAFAC class translation factor GTPase superfamily. Classic translation factor GTPase family. EF-G/EF-2 subfamily.

The protein resides in the cytoplasm. Catalyzes the GTP-dependent ribosomal translocation step during translation elongation. During this step, the ribosome changes from the pre-translocational (PRE) to the post-translocational (POST) state as the newly formed A-site-bound peptidyl-tRNA and P-site-bound deacylated tRNA move to the P and E sites, respectively. Catalyzes the coordinated movement of the two tRNA molecules, the mRNA and conformational changes in the ribosome. The polypeptide is Elongation factor G (Agrobacterium fabrum (strain C58 / ATCC 33970) (Agrobacterium tumefaciens (strain C58))).